The sequence spans 159 residues: Small ribosomal subunit protein uS5c (159 aa).

The S5 DRBM domain maps to 17–80; that stretch reads WEERVVSVQR…TDGKKNVITV (64 aa).

This sequence belongs to the universal ribosomal protein uS5 family. As to quaternary structure, part of the 30S ribosomal subunit. Contacts protein S4.

The protein resides in the plastid. The protein localises to the chloroplast. Functionally, with S4 and S12 plays an important role in translational accuracy. This Emiliania huxleyi (Coccolithophore) protein is Small ribosomal subunit protein uS5c (rps5).